A 142-amino-acid chain; its full sequence is Hemoglobin subunit alpha-I/II (142 aa).

The region spanning 2 to 142 (VLSAADKGNV…VSTVLTSKYR (141 aa)) is the Globin domain. Position 4 is a phosphoserine (Ser-4). Lys-8 and Lys-12 each carry N6-succinyllysine. Lys-17 carries the post-translational modification N6-acetyllysine; alternate. At Lys-17 the chain carries N6-succinyllysine; alternate. Tyr-25 carries the phosphotyrosine modification. Phosphoserine is present on Ser-36. An N6-succinyllysine modification is found at Lys-41. Phosphoserine is present on Ser-50. Position 59 (His-59) interacts with O2. His-88 lines the heme b pocket. Ser-103 is modified (phosphoserine). Thr-109 is modified (phosphothreonine). At Ser-125 the chain carries Phosphoserine. Phosphothreonine occurs at positions 135 and 138. At Ser-139 the chain carries Phosphoserine.

It belongs to the globin family. As to quaternary structure, heterotetramer of two alpha chains and two beta chains. Red blood cells.

In terms of biological role, involved in oxygen transport from the lung to the various peripheral tissues. This Bison bonasus (European bison) protein is Hemoglobin subunit alpha-I/II.